The chain runs to 362 residues: Photosystem II protein D1 3 (362 aa).

3 consecutive transmembrane segments (helical) span residues 29–46 (YVGWFGVLMIPTLLSATI), 118–133 (HFLIGVFCYLGREWEL), and 142–156 (WICIAYSAPVAAATA). Histidine 118 is a binding site for chlorophyll a. Tyrosine 126 contacts pheophytin a. [CaMn4O5] cluster is bound by residues aspartate 170 and glutamate 189. A helical transmembrane segment spans residues 197–218 (FHMLGVAGVFGGALISAMHGSL). A chlorophyll a-binding site is contributed by histidine 198. Residues histidine 215 and 264-265 (AF) each bind a quinone. Histidine 215 provides a ligand contact to Fe cation. Fe cation is bound at residue histidine 274. The helical transmembrane segment at 276–290 (IMAAFPVIGIWFTSL) threads the bilayer. The [CaMn4O5] cluster site is built by histidine 334, glutamate 335, aspartate 344, and alanine 346. Residues 347 to 362 (GTESAPVAVSTAKVGG) constitute a propeptide that is removed on maturation.

The protein belongs to the reaction center PufL/M/PsbA/D family. As to quaternary structure, PSII is composed of 1 copy each of membrane proteins PsbA, PsbB, PsbC, PsbD, PsbE, PsbF, PsbH, PsbI, PsbJ, PsbK, PsbL, PsbM, PsbT, PsbX, Psb30/Ycf12, peripheral proteins PsbO, CyanoQ (PsbQ), PsbU, PsbV and a large number of cofactors. It forms dimeric complexes. The D1/D2 heterodimer binds P680, chlorophylls that are the primary electron donor of PSII, and subsequent electron acceptors. It shares a non-heme iron and each subunit binds pheophytin, quinone, additional chlorophylls, carotenoids and lipids. D1 provides most of the ligands for the Mn4-Ca-O5 cluster of the oxygen-evolving complex (OEC). There is also a Cl(-1) ion associated with D1 and D2, which is required for oxygen evolution. The PSII complex binds additional chlorophylls, carotenoids and specific lipids. is required as a cofactor. Post-translationally, tyr-161 forms a radical intermediate that is referred to as redox-active TyrZ, YZ or Y-Z. In terms of processing, C-terminally processed by CtpA; processing is essential to allow assembly of the oxygen-evolving complex and thus photosynthetic growth.

Its subcellular location is the cell inner membrane. It carries out the reaction 2 a plastoquinone + 4 hnu + 2 H2O = 2 a plastoquinol + O2. Its function is as follows. Photosystem II (PSII) is a light-driven water:plastoquinone oxidoreductase that uses light energy to abstract electrons from H(2)O, generating O(2) and a proton gradient subsequently used for ATP formation. It consists of a core antenna complex that captures photons, and an electron transfer chain that converts photonic excitation into a charge separation. The D1/D2 (PsbA/PsbD) reaction center heterodimer binds P680, the primary electron donor of PSII as well as several subsequent electron acceptors. The protein is Photosystem II protein D1 3 of Gloeobacter violaceus (strain ATCC 29082 / PCC 7421).